Reading from the N-terminus, the 179-residue chain is Large ribosomal subunit protein uL6 (179 aa).

Belongs to the universal ribosomal protein uL6 family. As to quaternary structure, part of the 50S ribosomal subunit.

In terms of biological role, this protein binds to the 23S rRNA, and is important in its secondary structure. It is located near the subunit interface in the base of the L7/L12 stalk, and near the tRNA binding site of the peptidyltransferase center. In Rhodococcus erythropolis (strain PR4 / NBRC 100887), this protein is Large ribosomal subunit protein uL6.